Reading from the N-terminus, the 360-residue chain is Mediator of RNA polymerase II transcription subunit 6 (360 aa).

2 disordered regions span residues 186–238 and 316–360; these read PAQP…NDPL and AAAA…PGAA. Low complexity-rich tracts occupy residues 190–205 and 316–325; these read SAGA…YTAS and AAAAAANANA.

The protein belongs to the Mediator complex subunit 6 family. In terms of assembly, component of the Mediator complex.

The protein localises to the nucleus. In terms of biological role, component of the Mediator complex, a coactivator involved in the regulated transcription of nearly all RNA polymerase II-dependent genes. Mediator functions as a bridge to convey information from gene-specific regulatory proteins to the basal RNA polymerase II transcription machinery. Mediator is recruited to promoters by direct interactions with regulatory proteins and serves as a scaffold for the assembly of a functional preinitiation complex with RNA polymerase II and the general transcription factors. In Neurospora crassa (strain ATCC 24698 / 74-OR23-1A / CBS 708.71 / DSM 1257 / FGSC 987), this protein is Mediator of RNA polymerase II transcription subunit 6 (med-6).